A 93-amino-acid chain; its full sequence is Small ribosomal subunit protein uS19 (93 aa).

This sequence belongs to the universal ribosomal protein uS19 family.

In terms of biological role, protein S19 forms a complex with S13 that binds strongly to the 16S ribosomal RNA. This Mycolicibacterium paratuberculosis (strain ATCC BAA-968 / K-10) (Mycobacterium paratuberculosis) protein is Small ribosomal subunit protein uS19.